Here is a 415-residue protein sequence, read N- to C-terminus: Histidine--tRNA ligase (415 aa).

The protein belongs to the class-II aminoacyl-tRNA synthetase family. As to quaternary structure, homodimer.

The protein resides in the cytoplasm. The enzyme catalyses tRNA(His) + L-histidine + ATP = L-histidyl-tRNA(His) + AMP + diphosphate + H(+). This is Histidine--tRNA ligase from Clostridium botulinum (strain Langeland / NCTC 10281 / Type F).